We begin with the raw amino-acid sequence, 337 residues long: Visual pigment-like receptor peropsin (337 aa).

Residues 1 to 26 (MLRNNLGNSSDSKNEDGSVFSQTEHN) lie on the Extracellular side of the membrane. N-linked (GlcNAc...) asparagine glycosylation is present at Asn8. A helical transmembrane segment spans residues 27–49 (IVATYLIMAGMISIISNIIVLGI). The Cytoplasmic segment spans residues 50–61 (FIKYKELRTPTN). Residues 62–87 (AIIINLAVTDIGVSSIGYPMSAASDL) form a helical membrane-spanning segment. At 88–101 (YGSWKFGYAGCQVY) the chain is on the extracellular side. Cys98 and Cys175 are joined by a disulfide. A helical transmembrane segment spans residues 102-121 (AGLNIFFGMASIGLLTVVAV). Residues 122-140 (DRYLTICLPDVGRRMTTNT) are Cytoplasmic-facing. A helical transmembrane segment spans residues 141–164 (YIGLILGAWINGLFWALMPIIGWA). Topologically, residues 165-188 (SYAPDPTGATCTINWRKNDRSFVS) are extracellular. A helical membrane pass occupies residues 189–212 (YTMTVIAINFIVPLTVMFYCYYHV). Residues 213–240 (TLSIKHHTTSDCTESLNRDWSDQIDVTK) lie on the Cytoplasmic side of the membrane. The helical transmembrane segment at 241–264 (MSVIMICMFLVAWSPYSIVCLWAS) threads the bilayer. The Extracellular segment spans residues 265 to 272 (FGDPKKIP). A helical transmembrane segment spans residues 273 to 297 (PPMAIIAPLFAKSSTFYNPCIYVVA). Lys284 carries the post-translational modification N6-(retinylidene)lysine. Residues 298 to 337 (NKKFRRAMLAMFKCQTHQTMPVTSILPMDVSQNPLASGRI) lie on the Cytoplasmic side of the membrane.

The protein belongs to the G-protein coupled receptor 1 family. Opsin subfamily. As to expression, found only in the eye, where it is localized to the retinal pigment epithelium (RPE). In the RPE, it is localized to the microvilli that surround the photoreceptor outer segments.

The protein resides in the membrane. May play a role in rpe physiology either by detecting light directly or by monitoring the concentration of retinoids or other photoreceptor-derived compounds. This is Visual pigment-like receptor peropsin (RRH) from Homo sapiens (Human).